Here is a 218-residue protein sequence, read N- to C-terminus: Small ribosomal subunit protein uS3 (218 aa).

The KH type-2 domain occupies 38–106 (IREYLTKRLS…RVHINIVEIK (69 aa)).

This sequence belongs to the universal ribosomal protein uS3 family. In terms of assembly, part of the 30S ribosomal subunit. Forms a tight complex with proteins S10 and S14.

In terms of biological role, binds the lower part of the 30S subunit head. Binds mRNA in the 70S ribosome, positioning it for translation. The protein is Small ribosomal subunit protein uS3 of Anoxybacillus flavithermus (strain DSM 21510 / WK1).